A 487-amino-acid polypeptide reads, in one-letter code: Probable glutamate receptor (487 aa).

Positions 1 to 23 (MDKGLHFIFCVVTAVLLLRESSQ) are cleaved as a signal peptide. Residues 24–169 (TGAMRNDDAM…FFHFLAPFSK (146 aa)) lie on the Extracellular side of the membrane. N-linked (GlcNAc...) asparagine glycosylation occurs at Asn104. A helical transmembrane segment spans residues 170–190 (ETWTGLLFAYVLTCVCLFLVA). The Cytoplasmic portion of the chain corresponds to 191–235 (RLSPCEWNEPKNEENHFTFLNSLWFGAGALTLQGVTPRPKAFSVR). Residues 236 to 256 (VIAAIWWLFTIALLAAYIANF) traverse the membrane as a helical segment. Residues 257–419 (TALLSSGSEQ…EGWSPLQPQA (163 aa)) are Extracellular-facing. The chain crosses the membrane as a helical span at residues 420 to 440 (LGGLFLTLAIGLALGVIAAMV). Topologically, residues 441-487 (ELSNKSRHAAGHIKKSCCSIFTEEMCTRLRIKENTRQTQETSGRANA) are cytoplasmic.

This sequence belongs to the glutamate-gated ion channel (TC 1.A.10.1) family.

Its subcellular location is the cell membrane. It is found in the postsynaptic cell membrane. Its function is as follows. Receptor for glutamate. L-glutamate acts as an excitatory neurotransmitter at many synapses in the central nervous system. The postsynaptic actions of Glu are mediated by a variety of receptors that are named according to their selective agonists. In Gallus gallus (Chicken), this protein is Probable glutamate receptor (KBP).